A 943-amino-acid polypeptide reads, in one-letter code: WD repeat-containing protein 3 (943 aa).

WD repeat units lie at residues 21-60 (SQKGNIVFVTLRGEKGRYVAVPACEHVFIWDLRKGEKILI), 63-102 (GLKQEVTCLCPSPDGLHLAVGYEDGSIRIFSLLSGEGNVT), 105-144 (GHKAAITTLKYDQLGGRLASGSKDTDIIVWDVINESGLYR), 147-186 (GHKDAITQALFLREKNLLVTSGKDTMVKWWDLDTQHCFKT), and 189-228 (GHRTEVWGLVLLSEEKRLITGASDSELRVWDIAYLQEIED). Phosphoserine is present on residues S240 and S241. At T257 the chain carries Phosphothreonine. A WD 6 repeat occupies 277–316 (EGRDRVVNLAVDKTGRILACHGTDSVLELFCILSKKEIQK). Residues 326 to 345 (RKKAKLHSSKGEEEDPEVNV) form a disordered region. WD repeat units lie at residues 413 to 451 (GHRSDVRTLSFSSDNIAVLSAAADSIKIWNRSTLQCIRT), 453 to 493 (TCEY…ETID), 494 to 533 (AHDGALWSMSLSPDQRGFVTGGADKSVKFWDFELVKDENS), 547 to 586 (QLDEDVLCVSYSPNQKLLAVSLLDCTVKIFYVDTLKFFLS), 589 to 630 (GHKL…KSLF), 631 to 670 (AHDDSVMYLQFVPKSHLFFTAGKDHKIKQWDADKFEHIQT), and 673 to 712 (GHHQEIWCLAVSPSGDYVVSSSHDKSLRLWERTREPLILE). Glycyl lysine isopeptide (Lys-Gly) (interchain with G-Cter in SUMO2) cross-links involve residues K474 and K529. A Phosphoserine modification is found at S726.

It belongs to the WD repeat WDR3/UTP12 family. As to quaternary structure, part of the small subunit (SSU) processome, composed of more than 70 proteins and the RNA chaperone small nucleolar RNA (snoRNA) U3. In terms of tissue distribution, ubiquitous.

The protein localises to the nucleus. It localises to the nucleolus. Its function is as follows. Part of the small subunit (SSU) processome, first precursor of the small eukaryotic ribosomal subunit. During the assembly of the SSU processome in the nucleolus, many ribosome biogenesis factors, an RNA chaperone and ribosomal proteins associate with the nascent pre-rRNA and work in concert to generate RNA folding, modifications, rearrangements and cleavage as well as targeted degradation of pre-ribosomal RNA by the RNA exosome. The sequence is that of WD repeat-containing protein 3 from Homo sapiens (Human).